The following is a 231-amino-acid chain: Cytidylate kinase (231 aa).

Residue 18–26 (GPSGTGKSS) coordinates ATP.

Belongs to the cytidylate kinase family. Type 1 subfamily.

The protein localises to the cytoplasm. It carries out the reaction CMP + ATP = CDP + ADP. The catalysed reaction is dCMP + ATP = dCDP + ADP. In Streptomyces coelicolor (strain ATCC BAA-471 / A3(2) / M145), this protein is Cytidylate kinase.